The primary structure comprises 372 residues: N-methyl-L-tryptophan oxidase (372 aa).

4 to 34 (DLIIIGSGSVGAAAGYYATRAGLNVLMTDAH) contributes to the FAD binding site. Cysteine 308 carries the S-8alpha-FAD cysteine modification.

It belongs to the MSOX/MTOX family. MTOX subfamily. In terms of assembly, monomer. The cofactor is FAD.

The enzyme catalyses N(alpha)-methyl-L-tryptophan + O2 + H2O = L-tryptophan + formaldehyde + H2O2. Functionally, catalyzes the oxidative demethylation of N-methyl-L-tryptophan. The polypeptide is N-methyl-L-tryptophan oxidase (Escherichia coli O17:K52:H18 (strain UMN026 / ExPEC)).